We begin with the raw amino-acid sequence, 495 residues long: Glutamyl-tRNA(Gln) amidotransferase subunit A (495 aa).

Catalysis depends on charge relay system residues lysine 78 and serine 159. Serine 183 serves as the catalytic Acyl-ester intermediate.

It belongs to the amidase family. GatA subfamily. In terms of assembly, heterotrimer of A, B and C subunits.

It carries out the reaction L-glutamyl-tRNA(Gln) + L-glutamine + ATP + H2O = L-glutaminyl-tRNA(Gln) + L-glutamate + ADP + phosphate + H(+). Its function is as follows. Allows the formation of correctly charged Gln-tRNA(Gln) through the transamidation of misacylated Glu-tRNA(Gln) in organisms which lack glutaminyl-tRNA synthetase. The reaction takes place in the presence of glutamine and ATP through an activated gamma-phospho-Glu-tRNA(Gln). This is Glutamyl-tRNA(Gln) amidotransferase subunit A from Rhizorhabdus wittichii (strain DSM 6014 / CCUG 31198 / JCM 15750 / NBRC 105917 / EY 4224 / RW1) (Sphingomonas wittichii).